Reading from the N-terminus, the 538-residue chain is Sterile alpha motif domain-containing protein 1 (538 aa).

Residues 1 to 11 (MAGPPALPPPE) are compositionally biased toward pro residues. 2 disordered regions span residues 1–30 (MAGP…ASPH) and 92–247 (SYRN…GAAR). The segment covering 12 to 29 (TAAAATTAAAASSSAASP) has biased composition (low complexity). Residues 23–99 (SSSAASPHYQ…SISYRNAARV (77 aa)) form the SAMD1-like winged helix (WH) domain. The residue at position 107 (Thr107) is a Phosphothreonine. Over residues 115 to 125 (PRGAPAAAAAA) the composition is skewed to low complexity. A compositionally biased stretch (pro residues) spans 126-139 (APPPTPAPPPPPAP). The segment covering 140–158 (VAAAAPARAPRAAAAAATA) has biased composition (low complexity). Ser161 is subject to Phosphoserine. A compositionally biased stretch (low complexity) spans 168–177 (GPRAQRAAPL). The span at 178 to 236 (AAPPPAPAAPPAVAPPAGPRRAPPPAVAAREPPLPPPPQPPAPPQQQQPPPPQPQPPPE) shows a compositional bias: pro residues. Over residues 237 to 247 (GGAVRAGGAAR) the composition is skewed to low complexity. The residue at position 261 (Ser261) is a Phosphoserine. The segment covering 282-291 (AARGRLERTR) has biased composition (basic and acidic residues). Residues 282-458 (AARGRLERTR…PPGRKEKPSD (177 aa)) form a disordered region. The segment covering 328-351 (KEEEEDDDEDEDEEDDVSEGSEVP) has biased composition (acidic residues). The segment covering 425 to 436 (SPSPVPLPPGKP) has biased composition (pro residues). Positions 462–530 (WTVMDVVEYF…KVLQQGHFED (69 aa)) constitute an SAM domain.

Homopolymerize into a closed pentameric ring. Interacts (via SAM domain) with L3MBTL3 (via SAM domain); the interaction mediates L3MBTL3 binding to chromatin. Interacts (via WH domain) with KDM1A; the interaction modulates KDM1A function. In terms of tissue distribution, expressed in atherosclerotic lesions, not in normal intima. Expressed in foam cells.

It is found in the nucleus. The protein resides in the chromosome. It localises to the secreted. Functionally, unmethylated CpG islands (CGIs)-binding protein which localizes to H3K4me3-decorated CGIs, where it acts as a transcriptional repressor. Tethers L3MBTL3 to chromatin and interacts with the KDM1A histone demethylase complex to modulate H3K4me2 and H3K4me3 levels at CGIs. Plays a role in atherogenesis by binding with LDL on cell surface and promoting LDL oxidation which leads to the formation of foam cell. This Homo sapiens (Human) protein is Sterile alpha motif domain-containing protein 1.